A 427-amino-acid chain; its full sequence is Adenylosuccinate synthetase (427 aa).

GTP-binding positions include 12 to 18 (GDEGKGK) and 40 to 42 (GHT). Asp13 functions as the Proton acceptor in the catalytic mechanism. Mg(2+) contacts are provided by Asp13 and Gly40. Residues 13–16 (DEGK), 38–41 (NAGH), Thr128, Arg142, Gln223, Thr238, and Arg302 contribute to the IMP site. His41 acts as the Proton donor in catalysis. Position 298–304 (298–304 (TTTGRPR)) interacts with substrate. GTP is bound by residues Arg304, 330-332 (KLD), and 412-414 (AVG).

It belongs to the adenylosuccinate synthetase family. As to quaternary structure, homodimer. Mg(2+) is required as a cofactor.

Its subcellular location is the cytoplasm. It carries out the reaction IMP + L-aspartate + GTP = N(6)-(1,2-dicarboxyethyl)-AMP + GDP + phosphate + 2 H(+). It participates in purine metabolism; AMP biosynthesis via de novo pathway; AMP from IMP: step 1/2. Plays an important role in the de novo pathway of purine nucleotide biosynthesis. Catalyzes the first committed step in the biosynthesis of AMP from IMP. The protein is Adenylosuccinate synthetase of Moorella thermoacetica (strain ATCC 39073 / JCM 9320).